Reading from the N-terminus, the 201-residue chain is Probable chemoreceptor glutamine deamidase CheD 2 (201 aa).

This sequence belongs to the CheD family.

The catalysed reaction is L-glutaminyl-[protein] + H2O = L-glutamyl-[protein] + NH4(+). In terms of biological role, probably deamidates glutamine residues to glutamate on methyl-accepting chemotaxis receptors (MCPs), playing an important role in chemotaxis. This Chromobacterium violaceum (strain ATCC 12472 / DSM 30191 / JCM 1249 / CCUG 213 / NBRC 12614 / NCIMB 9131 / NCTC 9757 / MK) protein is Probable chemoreceptor glutamine deamidase CheD 2.